We begin with the raw amino-acid sequence, 257 residues long: Diphthine synthase (257 aa).

S-adenosyl-L-methionine contacts are provided by residues I11, D89, I92, 117 to 118 (SV), L169, L210, and H235.

It belongs to the diphthine synthase family. Homodimer.

The catalysed reaction is 2-[(3S)-amino-3-carboxypropyl]-L-histidyl-[translation elongation factor 2] + 3 S-adenosyl-L-methionine = diphthine-[translation elongation factor 2] + 3 S-adenosyl-L-homocysteine + 3 H(+). It participates in protein modification; peptidyl-diphthamide biosynthesis. S-adenosyl-L-methionine-dependent methyltransferase that catalyzes the trimethylation of the amino group of the modified target histidine residue in translation elongation factor 2 (EF-2), to form an intermediate called diphthine. The three successive methylation reactions represent the second step of diphthamide biosynthesis. This chain is Diphthine synthase, found in Saccharolobus solfataricus (strain ATCC 35092 / DSM 1617 / JCM 11322 / P2) (Sulfolobus solfataricus).